We begin with the raw amino-acid sequence, 185 residues long: Elongation factor P (185 aa).

Belongs to the elongation factor P family.

The protein resides in the cytoplasm. It functions in the pathway protein biosynthesis; polypeptide chain elongation. Its function is as follows. Involved in peptide bond synthesis. Stimulates efficient translation and peptide-bond synthesis on native or reconstituted 70S ribosomes in vitro. Probably functions indirectly by altering the affinity of the ribosome for aminoacyl-tRNA, thus increasing their reactivity as acceptors for peptidyl transferase. The protein is Elongation factor P of Thermoanaerobacter sp. (strain X514).